Here is a 286-residue protein sequence, read N- to C-terminus: Putative chaperone BssE (286 aa).

ATP contacts are provided by residues 47–54 and 108–115; these read GKQGCGKS and GCVIHLEE.

Belongs to the CbbQ/NirQ/NorQ/GpvN family.

Functionally, may have a role in assembly and/or activation of benzylsuccinate synthase. The protein is Putative chaperone BssE (bssE) of Thauera aromatica.